The primary structure comprises 310 residues: MVKVYAPASSANMSVGFDVLGAAVTPVDGALLGDVVTVEAAETFSLNNLGRFADKLPSEPRENIVYQCWERFCQELGKQIPVAMTLEKNMPIGSGLGSSACSVVAALMAMNEHCGKPLNDTRLLALMGELEGRISGSIHYDNVAPCFLGGMQLMIEENDIISQQVPGFDEWLWVLAYPGIKVSTAEARAILPAQYRRQDCIAHGRHLAGFIHACYSRQPELAAKLMKDVIAEPYRERLLPGFRQARQAVAEIGAVASGISGSGPTLFALCDKPETAQRVADWLGKNYLQNQEGFVHICRLDTAGARVLEN.

P91–C101 provides a ligand contact to ATP.

The protein belongs to the GHMP kinase family. Homoserine kinase subfamily.

The protein resides in the cytoplasm. It carries out the reaction L-homoserine + ATP = O-phospho-L-homoserine + ADP + H(+). It participates in amino-acid biosynthesis; L-threonine biosynthesis; L-threonine from L-aspartate: step 4/5. Catalyzes the ATP-dependent phosphorylation of L-homoserine to L-homoserine phosphate. The protein is Homoserine kinase of Escherichia coli (strain K12 / MC4100 / BW2952).